We begin with the raw amino-acid sequence, 145 residues long: Maximins 5/H4 type 2 (145 aa).

The N-terminal stretch at 1–18 (MNFKYIVAVSFLIASAYA) is a signal peptide. Propeptides lie at residues 19-43 (RSVQ…REIR) and 74-124 (TAEE…KEKR). Leu144 carries the post-translational modification Leucine amide.

It belongs to the bombinin family. Expressed by the skin glands.

It localises to the secreted. Functionally, maximin-5 shows antibacterial activity against both Gram-positive and Gram-negative bacteria. The only exception is the resistance of E.coli. Also shows antimicrobial activity against fungi C.albicans, A.flavus and P.uticale. It has little hemolytic activity. It does not possess a significant cytotoxicity against tumor cell lines. It does not possess a significant anti-HIV activity. Maximin-H4 shows antibacterial activity against both Gram-positive and Gram-negative bacteria. It also shows antimicrobial activity against the fungus C.albicans. Shows strong hemolytic activity. In Bombina maxima (Giant fire-bellied toad), this protein is Maximins 5/H4 type 2.